A 208-amino-acid polypeptide reads, in one-letter code: Large ribosomal subunit protein uL3 (208 aa).

The disordered stretch occupies residues 134 to 153 (SKFHREAGSTGQCTSPGRTF).

This sequence belongs to the universal ribosomal protein uL3 family. In terms of assembly, part of the 50S ribosomal subunit. Forms a cluster with proteins L14 and L19.

One of the primary rRNA binding proteins, it binds directly near the 3'-end of the 23S rRNA, where it nucleates assembly of the 50S subunit. The chain is Large ribosomal subunit protein uL3 from Treponema pallidum (strain Nichols).